Consider the following 162-residue polypeptide: NADH-quinone oxidoreductase subunit I (162 aa).

4Fe-4S ferredoxin-type domains are found at residues 52-82 (LRRY…IEAG) and 93-122 (TRYD…EGPN). Residues Cys62, Cys65, Cys68, Cys72, Cys102, Cys105, Cys108, and Cys112 each contribute to the [4Fe-4S] cluster site.

This sequence belongs to the complex I 23 kDa subunit family. NDH-1 is composed of 14 different subunits. Subunits NuoA, H, J, K, L, M, N constitute the membrane sector of the complex. [4Fe-4S] cluster serves as cofactor.

The protein localises to the cell inner membrane. The enzyme catalyses a quinone + NADH + 5 H(+)(in) = a quinol + NAD(+) + 4 H(+)(out). In terms of biological role, NDH-1 shuttles electrons from NADH, via FMN and iron-sulfur (Fe-S) centers, to quinones in the respiratory chain. The immediate electron acceptor for the enzyme in this species is believed to be ubiquinone. Couples the redox reaction to proton translocation (for every two electrons transferred, four hydrogen ions are translocated across the cytoplasmic membrane), and thus conserves the redox energy in a proton gradient. This chain is NADH-quinone oxidoreductase subunit I, found in Methylobacterium sp. (strain 4-46).